Reading from the N-terminus, the 693-residue chain is Polyribonucleotide nucleotidyltransferase (693 aa).

Aspartate 490 and aspartate 496 together coordinate Mg(2+). The region spanning 557–617 (PRISWFFIDP…EKVQEAVEYI (61 aa)) is the KH domain. Residues 627-691 (GDLYTGKVTR…DAGRLQFRRL (65 aa)) enclose the S1 motif domain.

Belongs to the polyribonucleotide nucleotidyltransferase family. Mg(2+) is required as a cofactor.

The protein localises to the cytoplasm. The enzyme catalyses RNA(n+1) + phosphate = RNA(n) + a ribonucleoside 5'-diphosphate. Its function is as follows. Involved in mRNA degradation. Catalyzes the phosphorolysis of single-stranded polyribonucleotides processively in the 3'- to 5'-direction. In Fervidobacterium nodosum (strain ATCC 35602 / DSM 5306 / Rt17-B1), this protein is Polyribonucleotide nucleotidyltransferase.